The chain runs to 548 residues: Solute carrier family 22 member 7 (548 aa).

The chain crosses the membrane as a helical span at residues 21 to 41; it reads VALLALPRVLLPLHFLLPIFL. Residue asparagine 91 is glycosylated (N-linked (GlcNAc...) asparagine). The next 11 membrane-spanning stretches (helical) occupy residues 146–166, 180–200, 204–224, 234–254, 259–279, 346–366, 376–397, 404–423, 432–452, 466–486, and 493–513; these read AAST…GYLS, VSTL…MFAI, LTGS…LEWL, VLSS…GYLI, WLLL…WWVP, ISLC…GLSL, YQTQ…YLSV, LTQA…RLLV, TVLA…AYLF, MGLT…AALL, and LPKL…LLLP. The active-site Important for glutamate counteranion efflux is phenylalanine 441. The segment at 522–548 is disordered; it reads ETIQDVERKSAPTSLQEEEMPMKQVQN.

The protein belongs to the major facilitator (TC 2.A.1) superfamily. Organic cation transporter (TC 2.A.1.19) family. Mainly expressed in liver and kidney. In kidney, expressed in proximal tubular cells. Also expressed in pancreas, small intestine, spinal cord, lung, brain and heart. Expressed in fetal liver.

It is found in the basolateral cell membrane. The protein localises to the apical cell membrane. The protein resides in the cell membrane. It localises to the cytoplasm. Its subcellular location is the cytosol. It catalyses the reaction orotate(out) + L-glutamate(in) = orotate(in) + L-glutamate(out). The catalysed reaction is 3',5'-cyclic GMP(in) = 3',5'-cyclic GMP(out). The enzyme catalyses GMP(in) = GMP(out). It carries out the reaction 2'-deoxyguanosine(in) = 2'-deoxyguanosine(out). It catalyses the reaction GDP(in) = GDP(out). The catalysed reaction is guanosine(in) = guanosine(out). The enzyme catalyses GTP(in) = GTP(out). It carries out the reaction 3',5'-cyclic AMP(in) = 3',5'-cyclic AMP(out). It catalyses the reaction creatinine(in) = creatinine(out). The catalysed reaction is prostaglandin E2(out) = prostaglandin E2(in). The enzyme catalyses 2-oxoglutarate(in) = 2-oxoglutarate(out). It carries out the reaction glutarate(in) = glutarate(out). It catalyses the reaction urate(out) = urate(in). The catalysed reaction is estrone 3-sulfate(out) = estrone 3-sulfate(in). The enzyme catalyses prostaglandin F2alpha(out) = prostaglandin F2alpha(in). Functions as a Na(+)-independent bidirectional multispecific transporter. Contributes to the renal and hepatic elimination of endogenous organic compounds from the systemic circulation into the urine and bile, respectively. Capable of transporting a wide range of purine and pyrimidine nucleobases, nucleosides and nucleotides, with cGMP, 2'deoxyguanosine and GMP being the preferred substrates. Functions as a pH- and chloride-independent cGMP bidirectional facilitative transporter that can regulate both intracellular and extracellular levels of cGMP and may be involved in cGMP signaling pathways. Mediates orotate/glutamate bidirectional exchange and most likely display a physiological role in hepatic release of glutamate into the blood. Involved in renal secretion and possible reabsorption of creatinine. Able to uptake prostaglandin E2 (PGE2) and may contribute to PGE2 renal excretion. Also transports alpha-ketoglutarate and urate. Apart from the orotate/glutamate exchange, the counterions for the uptake of other SLC22A7/OAT2 substrates remain to be identified. Functionally, non functional transporter. Its function is as follows. Involved in the uptake of prostaglandin F2-alpha (PGF2-alpha). In Homo sapiens (Human), this protein is Solute carrier family 22 member 7.